Reading from the N-terminus, the 278-residue chain is MAVSSLAGLGLRREMLAEFSQSVPAQIDFFEVAPENWMALGGKYGKQFRALTERHAFFCHGLSLSIGSSAPLDIDFIKGIKAFLDLHGIAVYSEHLSYCSGSGHLYDLMPMPFTPEAVRHIAGRVKQVEDIIERPLILENISFYAAPGAQMTELEFVLAVLEEADCQLLLDVNNIYVNSINHNYDAAAYLAAMPTERIRYLHVAGHYVEAPDLIVDTHGADIVDPVWQLLCDCYALHGPLPTLLERDFNIPPIGELLQEIDRIRDYQAAAIRTSRRAG.

Belongs to the UPF0276 family.

The chain is UPF0276 protein Sama_1305 from Shewanella amazonensis (strain ATCC BAA-1098 / SB2B).